The chain runs to 412 residues: Class E basic helix-loop-helix protein 40 (412 aa).

Positions 1 to 21 (MERIPSAQPPPTCLPKAPGLE) are disordered. The essential for interaction with BMAL1, E-box binding and repressor activity against the CLOCK-BMAL1 heterodimer stretch occupies residues 1-139 (MERIPSAQPP…LSGRNVEAGQ (139 aa)). Residues 52–107 (TYKLPHRLIEKKRRDRINECIAQLKDLLPEHLKLTTLGHLEKAVVLELTLKHVKAL) form the bHLH domain. A necessary for interaction with RXRA and repressor activity against RXRA region spans residues 75–79 (LKDLL). Residues 142 to 175 (FCSGFQTCAREVLQYLAKHENTRDLKSSQLVTHL) form the Orange domain. Lys-159 is covalently cross-linked (Glycyl lysine isopeptide (Lys-Gly) (interchain with G-Cter in SUMO1, SUMO2 and SUMO3)). A Glycyl lysine isopeptide (Lys-Gly) (interchain with G-Cter in SUMO2) cross-link involves residue Lys-167. 2 disordered regions span residues 182–257 (LLQG…LRVE) and 279–298 (KQESEEPPMKKSRMQLSDDE). Ser-235 is subject to Phosphoserine. A compositionally biased stretch (basic and acidic residues) spans 248 to 257 (ESEKSELRVE). Residue Lys-279 forms a Glycyl lysine isopeptide (Lys-Gly) (interchain with G-Cter in SUMO1); alternate linkage. Lys-279 participates in a covalent cross-link: Glycyl lysine isopeptide (Lys-Gly) (interchain with G-Cter in SUMO1, SUMO2 and SUMO3); alternate. Residue Lys-279 forms a Glycyl lysine isopeptide (Lys-Gly) (interchain with G-Cter in SUMO2); alternate linkage. Lys-288 is covalently cross-linked (Glycyl lysine isopeptide (Lys-Gly) (interchain with G-Cter in SUMO2)). Ser-383 is subject to Phosphoserine.

As to quaternary structure, homodimer. Heterodimer with BHLHE41/DEC2. Interacts with TCF3/E47. Interacts with ubiquitin-conjugating enzyme UBE2I/UBC9. Interacts with HDAC1, SUMO1, RXRA and BMAL1. Ubiquitinated; which may lead to proteasomal degradation. Post-translationally, sumoylation inhibits its ubiquitination and promotes its negative regulation of the CLOCK-BMAL1 heterodimer transcriptional activator activity.

The protein resides in the cytoplasm. It localises to the nucleus. Its function is as follows. Transcriptional repressor involved in the regulation of the circadian rhythm by negatively regulating the activity of the clock genes and clock-controlled genes. Acts as the negative limb of a novel autoregulatory feedback loop (DEC loop) which differs from the one formed by the PER and CRY transcriptional repressors (PER/CRY loop). Both these loops are interlocked as it represses the expression of PER1/2 and in turn is repressed by PER1/2 and CRY1/2. Represses the activity of the circadian transcriptional activator: CLOCK-BMAL1|BMAL2 heterodimer by competing for the binding to E-box elements (5'-CACGTG-3') found within the promoters of its target genes. Negatively regulates its own expression and the expression of DBP and BHLHE41/DEC2. Acts as a corepressor of RXR and the RXR-LXR heterodimers and represses the ligand-induced RXRA and NR1H3/LXRA transactivation activity. May be involved in the regulation of chondrocyte differentiation via the cAMP pathway. Represses the transcription of NR0B2 and attentuates the transactivation of NR0B2 by the CLOCK-BMAL1 complex. Drives the circadian rhythm of blood pressure through transcriptional repression of ATP1B1 in the cardiovascular system. The sequence is that of Class E basic helix-loop-helix protein 40 (BHLHE40) from Ovis aries (Sheep).